The chain runs to 146 residues: Basic phospholipase A2 beta-bungarotoxin A1 chain (146 aa).

Residues 1-19 (MNPAHLLVLPAVCVSFLGA) form the signal peptide. Positions 20–27 (SIIPPQSL) are excised as a propeptide. Disulfide bonds link Cys54–Cys145, Cys56–Cys72, Cys71–Cys126, Cys78–Cys119, Cys87–Cys112, and Cys105–Cys117. Tyr55, Gly57, and Gly59 together coordinate Ca(2+). His75 is a catalytic residue. Residue Asp76 participates in Ca(2+) binding. The active site involves Asp120.

It belongs to the phospholipase A2 family. Group I subfamily. D49 sub-subfamily. Heterodimer with beta-bungarotoxin B chain; disulfide-linked. The A chain has phospholipase A2 activity and the B chain shows homology with the basic protease inhibitors. The cofactor is Ca(2+). Expressed by the venom gland.

The protein localises to the secreted. The enzyme catalyses a 1,2-diacyl-sn-glycero-3-phosphocholine + H2O = a 1-acyl-sn-glycero-3-phosphocholine + a fatty acid + H(+). In terms of biological role, snake venom phospholipase A2 (PLA2) that inhibits neuromuscular transmission by blocking acetylcholine release from the nerve termini. PLA2 catalyzes the calcium-dependent hydrolysis of the 2-acyl groups in 3-sn-phosphoglycerides. The chain is Basic phospholipase A2 beta-bungarotoxin A1 chain from Bungarus flaviceps flaviceps (Red-headed krait).